The following is a 493-amino-acid chain: MRFTFSNDLGTLFTIILAIGFIINLVLAFIIIFLERNRRTASSTWAWLFVLFVLPLIGFILYLFFGRTVSARKLNKNNGNVLTDFDGLLKQQIESFDKGNYGTDNKQVQKHHDLVRMLLMDQDGFLTENNKVDHFIDGNDLYDQVLKDIKNAKEYIHLEYYTFALDGLGKRILHALEEKLKQGLEVKILYDDVGSKNVKMANFDHFKSLGGEVEAFFASKLPLLNFRMNNRNHRKIIVIDGQLGYVGGFNIGDEYLGLGKLGYWRDTHLRIQGDAVDALQLRFILDWNSQAHRPQFEYDVKYFPKKNGPLGNSPIQIAASGPASDWHQIEYGYTKMIMSAKKSVYLQSPYFIPDNSYINAIKIAAKSGVDVHLMIPCKPDHPLVYWATFSNASDLLSSGVKIYTYENGFIHSKMCLIDDEIVSVGTANMDFRSFELNFEVNAFVYDENLAKDLRVAYEHDITKSKQLTKESYANRPLSVKFKESLAKLVSPIL.

Transmembrane regions (helical) follow at residues 13 to 33 (FTII…IIIF) and 45 to 65 (WAWL…YLFF). PLD phosphodiesterase domains follow at residues 228 to 255 (MNNR…GDEY) and 406 to 433 (ENGF…DFRS). Catalysis depends on residues H233, K235, D240, H411, K413, and D418.

This sequence belongs to the phospholipase D family. Cardiolipin synthase subfamily.

Its subcellular location is the cell membrane. It carries out the reaction 2 a 1,2-diacyl-sn-glycero-3-phospho-(1'-sn-glycerol) = a cardiolipin + glycerol. Its function is as follows. Catalyzes the reversible phosphatidyl group transfer from one phosphatidylglycerol molecule to another to form cardiolipin (CL) (diphosphatidylglycerol) and glycerol. The chain is Cardiolipin synthase 1 (cls1) from Staphylococcus aureus (strain COL).